We begin with the raw amino-acid sequence, 300 residues long: GTPase Era (300 aa).

Residues 8–176 (RCGYVAIVGR…EKVIADHLPE (169 aa)) enclose the Era-type G domain. The interval 16-23 (GRPNVGKS) is G1. 16–23 (GRPNVGKS) is a GTP binding site. The segment at 42–46 (QTTRH) is G2. Residues 63–66 (DTPG) form a G3 region. GTP contacts are provided by residues 63–67 (DTPGM) and 125–128 (NKTD). Residues 125–128 (NKTD) are G4. The G5 stretch occupies residues 155–157 (ISA). The KH type-2 domain maps to 199–283 (VREKIMRQLG…MLNLWVKVKG (85 aa)).

Belongs to the TRAFAC class TrmE-Era-EngA-EngB-Septin-like GTPase superfamily. Era GTPase family. In terms of assembly, monomer.

The protein resides in the cytoplasm. It is found in the cell inner membrane. In terms of biological role, an essential GTPase that binds both GDP and GTP, with rapid nucleotide exchange. Plays a role in 16S rRNA processing and 30S ribosomal subunit biogenesis and possibly also in cell cycle regulation and energy metabolism. This is GTPase Era from Pseudomonas fluorescens (strain Pf0-1).